The chain runs to 752 residues: Multifunctional tryptophan biosynthesis protein (752 aa).

Positions 23–223 constitute a Glutamine amidotransferase type-1 domain; sequence NVILIDNYDS…LELTAGTWDN (201 aa). Residue 74–76 participates in L-glutamine binding; the sequence is GPG. The active-site Nucleophile; for GATase activity is the Cys102. Residues Gln106 and 152-153 each bind L-glutamine; that span reads SL. Catalysis depends on for GATase activity residues His197 and Glu199. Residues 239 to 503 are indole-3-glycerol phosphate synthase; sequence ILDKIYAHRK…DTSAFVAQLL (265 aa). Residues 519-752 are N-(5'-phosphoribosyl)anthranilate isomerase; that stretch reads LVKICGTRTE…FVKSAKSIRQ (234 aa).

It carries out the reaction N-(5-phospho-beta-D-ribosyl)anthranilate = 1-(2-carboxyphenylamino)-1-deoxy-D-ribulose 5-phosphate. It catalyses the reaction 1-(2-carboxyphenylamino)-1-deoxy-D-ribulose 5-phosphate + H(+) = (1S,2R)-1-C-(indol-3-yl)glycerol 3-phosphate + CO2 + H2O. The enzyme catalyses chorismate + L-glutamine = anthranilate + pyruvate + L-glutamate + H(+). Its pathway is amino-acid biosynthesis; L-tryptophan biosynthesis; L-tryptophan from chorismate: step 1/5. It functions in the pathway amino-acid biosynthesis; L-tryptophan biosynthesis; L-tryptophan from chorismate: step 3/5. The protein operates within amino-acid biosynthesis; L-tryptophan biosynthesis; L-tryptophan from chorismate: step 4/5. In terms of biological role, trifunctional enzyme bearing the Gln amidotransferase (GATase) domain of anthranilate synthase, indole-glycerolphosphate synthase, and phosphoribosylanthranilate isomerase activities. This is Multifunctional tryptophan biosynthesis protein (trpC) from Penicillium chrysogenum (Penicillium notatum).